The chain runs to 346 residues: Phosphoribosylformylglycinamidine cyclo-ligase (346 aa).

This sequence belongs to the AIR synthase family.

The protein localises to the cytoplasm. It carries out the reaction 2-formamido-N(1)-(5-O-phospho-beta-D-ribosyl)acetamidine + ATP = 5-amino-1-(5-phospho-beta-D-ribosyl)imidazole + ADP + phosphate + H(+). Its pathway is purine metabolism; IMP biosynthesis via de novo pathway; 5-amino-1-(5-phospho-D-ribosyl)imidazole from N(2)-formyl-N(1)-(5-phospho-D-ribosyl)glycinamide: step 2/2. This is Phosphoribosylformylglycinamidine cyclo-ligase from Alteromonas mediterranea (strain DSM 17117 / CIP 110805 / LMG 28347 / Deep ecotype).